The chain runs to 422 residues: O-mycaminosyltylonolide 6-deoxyallosyltransferase (422 aa).

Belongs to the glycosyltransferase 28 family.

It carries out the reaction 5-O-beta-D-mycaminosyltylonolide + dTDP-6-deoxy-alpha-D-allose = demethyllactenocin + dTDP + H(+). Functionally, involved in the biosynthesis of the macrolide antibiotic tylosin derived from the polyketide lactone tylactone. Catalyzes the transfer of 6-deoxy-alpha-D-allose from dTDP-6-deoxy-alpha-D-allose to O-mycaminosyltylonolide (OMT) to yield demethyllactenocin. The chain is O-mycaminosyltylonolide 6-deoxyallosyltransferase from Streptomyces fradiae (Streptomyces roseoflavus).